Reading from the N-terminus, the 233-residue chain is Serine-rich 25 kDa antigen protein (233 aa).

The segment at 35-219 (KNEASPEKLE…DNNNLDAASS (185 aa)) is disordered. The span at 38–53 (ASPEKLEEAEEKEKSS) shows a compositional bias: basic and acidic residues. Acidic residues predominate over residues 61-71 (SNEDNEDDEDE). 10 consecutive repeat copies span residues 82-93 (SSSDKPDNKPEA), 102-113 (SSSDKPDNKPEA), 114-125 (SSSDKPDNKPEA), 126-137 (SSSDKPDNKPEA), 138-149 (SSSDKPDNKPEA), 150-161 (SSSDKPDNKPEA), 162-169 (SSTNKPEA), 170-177 (SSTNKPEA), 178-185 (SSTNKPEA), and 186-193 (SSTNKPEA). The tract at residues 82 to 161 (SSSDKPDNKP…SDKPDNKPEA (80 aa)) is 6 X 12 AA tandem repeats of S-S-S-D-K-P-D-N-K-P-E-A. Positions 83–159 (SSDKPDNKPE…SSSDKPDNKP (77 aa)) are enriched in basic and acidic residues. Residues 160–192 (EASSTNKPEASSTNKPEASSTNKPEASSTNKPE) show a composition bias toward polar residues. A 4 X 8 AA tandem repeats of S-S-T-N-K-P-E-A region spans residues 162 to 193 (SSTNKPEASSTNKPEASSTNKPEASSTNKPEA). Over residues 193–219 (ASSTSNSNDKSGSSSDNDNNNLDAASS) the composition is skewed to low complexity.

In terms of processing, phosphorylated on serine residue(s). O-glycosylated; glycans consist of single N-acetylglucosamine residues. Post-translationally, O-acylated; acyl group is probably palmitate, not myristate.

Its subcellular location is the cell membrane. In terms of biological role, plays a role in the adhesion to host cells. Involved in the adhesion to host apoptotic cells thereby facilitating their phagocytosis. The protein is Serine-rich 25 kDa antigen protein of Entamoeba histolytica (strain ATCC 30459 / HM-1:IMSS / ABRM).